The chain runs to 989 residues: R3H domain-containing protein 2 (989 aa).

2 disordered regions span residues 23–71 (EESV…AKSN) and 106–147 (SCPS…QEYT). Residues 36-56 (PSKEEIEKESEDTSLRQETQR) show a composition bias toward basic and acidic residues. Ser37 carries the phosphoserine modification. Residues 58–71 (TSNHGHARKRAKSN) show a composition bias toward basic residues. The span at 109 to 143 (SDKEEEKSTKDVSEKEDKDKNKEKVPRRMLSRDSS) shows a compositional bias: basic and acidic residues. Ser143 is modified (phosphoserine). The R3H domain maps to 169 to 232 (RMMLLKLEQE…AVIINKTSNT (64 aa)). The region spanning 233–303 (RIPEQRFSEH…VRERIFARET (71 aa)) is the SUZ domain. Disordered regions lie at residues 267–288 (DDNQIRVPLQDGRRSKSIEERE), 306–390 (NGYL…ISRP), 416–479 (TAQQ…FQPP), 493–524 (ASTGQPLPTSNYSTSSHAPPTQQVLPPQGYMQ), 674–738 (GTSP…PSMV), 751–793 (RGQK…SLSN), and 848–867 (QGQSGLKHGNRSKRQALKSA). Over residues 277–288 (DGRRSKSIEERE) the composition is skewed to basic and acidic residues. The segment covering 320–331 (SRTSSSRQSSTD) has biased composition (low complexity). Phosphoserine occurs at positions 344, 347, and 363. Over residues 416–428 (TAQQQQQQQQQLP) the composition is skewed to low complexity. Polar residues-rich tracts occupy residues 454 to 466 (PFGQMSLSRQGST) and 493 to 517 (ASTGQPLPTSNYSTSSHAPPTQQVL). Residues 695-704 (SPSPCSPPQM) show a composition bias toward pro residues. Residues 705–727 (PQQYSGVSPSGPGVVVMQLNVPN) are compositionally biased toward low complexity. The span at 761 to 771 (PESSPQANTQM) shows a compositional bias: polar residues. Positions 772–790 (SSSPVTSPTQSPAPSPVTS) are enriched in low complexity. A phosphoserine mark is found at Ser866 and Ser868. Phosphothreonine occurs at positions 869 and 873.

It localises to the nucleus. The polypeptide is R3H domain-containing protein 2 (R3HDM2) (Bos taurus (Bovine)).